A 673-amino-acid chain; its full sequence is Paralemmin-3 (673 aa).

Coiled coils occupy residues 4 to 49 and 75 to 101; these read SSLY…LRER and GQAQ…LQSA. Disordered regions lie at residues 49–78 and 99–213; these read RWLM…GQAQ and QSAS…GEAK. Residues 123–137 are compositionally biased toward polar residues; that stretch reads LSQSIVEAGSVGQTD. Phosphoserine is present on residues Ser124 and Ser143. A Phosphothreonine modification is found at Thr151. Phosphoserine occurs at positions 155, 157, and 260. 2 disordered regions span residues 295–343 and 356–673; these read VPEV…SFIW and LLVE…CAVM. Thr301 bears the Phosphothreonine mark. Phosphoserine is present on Ser325. Over residues 327–338 the composition is skewed to gly residues; it reads EGDGQGGSGGEE. 2 positions are modified to phosphoserine: Ser375 and Ser420. Basic and acidic residues-rich tracts occupy residues 392-477 and 487-532; these read EAEK…KRGA and GVEK…EKTQ. 2 positions are modified to phosphoserine: Ser544 and Ser660. S-palmitoyl cysteine attachment occurs at residues Cys667 and Cys669. Residue Cys670 is modified to Cysteine methyl ester. A lipid anchor (S-farnesyl cysteine) is attached at Cys670. The propeptide at 671–673 is removed in mature form; sequence AVM.

It belongs to the paralemmin family. In terms of assembly, interacts with SIGIRR. Palmitoylated on Cys-667 and Cys-669 and prenylated on Cys-670; which is required for membrane association.

Its subcellular location is the cytoplasm. It is found in the cell membrane. In terms of biological role, ATP-binding protein, which may act as a adapter in the Toll-like receptor (TLR) signaling. The chain is Paralemmin-3 (PALM3) from Homo sapiens (Human).